A 98-amino-acid polypeptide reads, in one-letter code: Large ribosomal subunit protein bL28 (98 aa).

The protein belongs to the bacterial ribosomal protein bL28 family.

This Thermus thermophilus (strain ATCC BAA-163 / DSM 7039 / HB27) protein is Large ribosomal subunit protein bL28.